Here is a 313-residue protein sequence, read N- to C-terminus: MNRLAVELPGLSLKNPIMPASGCFGFGREYARFYDLSVLGAIMIKATTKEPRFGNPTPRVAETPGGMLNAIGLQNPGLDKVLEEELPWLEQFDVPIIANIAGSTVEEYVEVAEAISQAPNVHALELNISCPNVKKGGIAFGTVPDVAAELTRLVKQVSAVPVYVKLSPNVTDIVAMAKAIEQAGADGLTMINTLVGMRIDVKTGRPILANGTGGLSGPAVKPIAIRMIYEVSQAVSIPIIGMGGIQTAEDVLEFFYAGASAVAVGTANFVDPFVCPTIIADLPALLDDLGIGHISECIGRSWKTGAHAVHCRA.

FMN contacts are provided by residues serine 21 and 45–46; that span reads KA. Substrate is bound by residues lysine 45 and 69–73; that span reads NAIGL. The FMN site is built by asparagine 99 and asparagine 127. Position 127 (asparagine 127) interacts with substrate. The active-site Nucleophile is cysteine 130. Lysine 165 and isoleucine 191 together coordinate FMN. Residue 192–193 participates in substrate binding; that stretch reads NT. FMN contacts are provided by residues glycine 217, 243 to 244, and 265 to 266; these read GG and GT.

It belongs to the dihydroorotate dehydrogenase family. Type 1 subfamily. In terms of assembly, heterotetramer of 2 PyrK and 2 PyrD type B subunits. Requires FMN as cofactor.

It localises to the cytoplasm. It catalyses the reaction (S)-dihydroorotate + NAD(+) = orotate + NADH + H(+). Its pathway is pyrimidine metabolism; UMP biosynthesis via de novo pathway; orotate from (S)-dihydroorotate (NAD(+) route): step 1/1. Functionally, catalyzes the conversion of dihydroorotate to orotate with NAD(+) as electron acceptor. In Geobacillus kaustophilus (strain HTA426), this protein is Dihydroorotate dehydrogenase B (NAD(+)), catalytic subunit (pyrD).